A 599-amino-acid polypeptide reads, in one-letter code: Aspartate--tRNA ligase (599 aa).

Glutamate 180 contributes to the L-aspartate binding site. The interval 204-207 is aspartate; it reads QIFK. Arginine 226 lines the L-aspartate pocket. Residues 226-228 and glutamine 235 contribute to the ATP site; that span reads RDE. L-aspartate is bound at residue histidine 454. Residue glutamate 488 coordinates ATP. L-aspartate is bound at residue arginine 495. An ATP-binding site is contributed by 540–543; sequence GLDR.

This sequence belongs to the class-II aminoacyl-tRNA synthetase family. Type 1 subfamily. As to quaternary structure, homodimer.

The protein resides in the cytoplasm. It catalyses the reaction tRNA(Asp) + L-aspartate + ATP = L-aspartyl-tRNA(Asp) + AMP + diphosphate. Catalyzes the attachment of L-aspartate to tRNA(Asp) in a two-step reaction: L-aspartate is first activated by ATP to form Asp-AMP and then transferred to the acceptor end of tRNA(Asp). The sequence is that of Aspartate--tRNA ligase from Clostridium botulinum (strain Alaska E43 / Type E3).